We begin with the raw amino-acid sequence, 201 residues long: MAFDLDTIRSAAQRVASSHGLDVVDVEYQGGAKHRMLRIFIEKNAEERAKLAAQSSGRVETIEVHEEMPREGMNPEHFSGVTHEDCSAFSTDFGTLLDVEELMPGASEYTLEVSSPGLDRKLQSRADYERFAGSLVKLSTFEPVNGNRHWQGRMAGLDGDTLRLDLTAMKQKGKGKEKKSAAETVEIALGNVEKAQLIPEI.

The protein belongs to the RimP family.

Its subcellular location is the cytoplasm. Functionally, required for maturation of 30S ribosomal subunits. In Acidobacterium capsulatum (strain ATCC 51196 / DSM 11244 / BCRC 80197 / JCM 7670 / NBRC 15755 / NCIMB 13165 / 161), this protein is Ribosome maturation factor RimP.